We begin with the raw amino-acid sequence, 289 residues long: MQGVYPAIVTPFKDGSVDFEGLRKNIDFLIENGVKGVVPVGTTGESPTLTPKEHEKVIEKVVDFVNGRVEVIAGTGSNSTLEALEFSQYAEDVGADRVLLITPYYNKPPQEGLKRHFGEVANSITVPIVLYNVPSRTALNIEPDTIKYLFDEYSNITAIKEANPNLSQVSEILDICNIDVLSGNDELTLPIMSLGGKGVISVIANIAPKEFVQMVEFAEKGKFDKAKEIHYKLFPLMKLMFIETNPIPIKTAMNMLGMPSGELRLPLCEMAQSNKLKLQNALNTLGLLK.

Position 43 (threonine 43) interacts with pyruvate. Tyrosine 131 functions as the Proton donor/acceptor in the catalytic mechanism. The Schiff-base intermediate with substrate role is filled by lysine 160. Pyruvate is bound at residue isoleucine 200.

It belongs to the DapA family. Homotetramer; dimer of dimers.

The protein localises to the cytoplasm. The enzyme catalyses L-aspartate 4-semialdehyde + pyruvate = (2S,4S)-4-hydroxy-2,3,4,5-tetrahydrodipicolinate + H2O + H(+). Its pathway is amino-acid biosynthesis; L-lysine biosynthesis via DAP pathway; (S)-tetrahydrodipicolinate from L-aspartate: step 3/4. Functionally, catalyzes the condensation of (S)-aspartate-beta-semialdehyde [(S)-ASA] and pyruvate to 4-hydroxy-tetrahydrodipicolinate (HTPA). The protein is 4-hydroxy-tetrahydrodipicolinate synthase of Methanococcus vannielii (strain ATCC 35089 / DSM 1224 / JCM 13029 / OCM 148 / SB).